Consider the following 486-residue polypeptide: dTDP-4-dehydro-6-deoxy-alpha-D-glucopyranose 2,3-dehydratase (486 aa).

DTDP-4-dehydro-6-deoxy-alpha-D-glucose contacts are provided by residues W66, 149 to 153 (TRSNY), S187, W304, R367, 383 to 385 (QCS), 388 to 389 (NY), and 421 to 424 (EGGR).

Belongs to the hexose 2,3-dehydratase family. As to quaternary structure, homodimer.

The catalysed reaction is dTDP-4-dehydro-6-deoxy-alpha-D-glucose = dTDP-3,4-didehydro-2,6-dideoxy-alpha-D-glucose + H2O. Its function is as follows. Involved in the biosynthesis of forosamine ((4-dimethylamino)-2,3,4,6-tetradeoxy-alpha-D-threo-hexopyranose), a highly deoxygenated sugar component of several bioactive natural products such as the insecticidal spinosyns A and D. Catalyzes the removal of the hydroxyl group at position C-2 of the hexose ring of dTDP-4-dehydro-6-deoxy-alpha-D-glucopyranose, and the oxidation of the hydroxyl group at position C-3 to form a carbonyl functionality. The product of the reaction, dTDP-2,6-dideoxy-D-glycero-hex-2-enos-4-ulose, is a highly unstable diketosugar, which spontaneously forms dTDP-3,4-didehydro-2,6-dideoxy-alpha-D-glucose. The sequence is that of dTDP-4-dehydro-6-deoxy-alpha-D-glucopyranose 2,3-dehydratase from Saccharopolyspora spinosa.